The chain runs to 111 residues: Universal stress protein B (111 aa).

2 helical membrane-spanning segments follow: residues 1 to 21 (MIST…NMAR) and 90 to 110 (FILT…LMLW).

This sequence belongs to the universal stress protein B family.

Its subcellular location is the cell inner membrane. The polypeptide is Universal stress protein B (Yersinia pseudotuberculosis serotype O:1b (strain IP 31758)).